A 190-amino-acid chain; its full sequence is MEQLKDKIRSHGIVLSDRVLKVDAFLNHQIDPVLMQAIGREFARRFRDDGITKIVTIEASGIAPAVMAGLELGVPVIFARKHQSLTLHDNLLTATVYSFTKQVESTIAVSTQHLSANDRVLIIDDFLANGKAAKGLISIINQAGASIAGLGIVIEKSFQTGRKELEEAGYRVESLARVASLADGAVQFID.

Positions 20 and 27 each coordinate xanthine. A 5-phospho-alpha-D-ribose 1-diphosphate-binding site is contributed by 128–132 (ANGKA). K156 serves as a coordination point for xanthine.

The protein belongs to the purine/pyrimidine phosphoribosyltransferase family. Xpt subfamily. In terms of assembly, homodimer.

The protein resides in the cytoplasm. It carries out the reaction XMP + diphosphate = xanthine + 5-phospho-alpha-D-ribose 1-diphosphate. Its pathway is purine metabolism; XMP biosynthesis via salvage pathway; XMP from xanthine: step 1/1. Functionally, converts the preformed base xanthine, a product of nucleic acid breakdown, to xanthosine 5'-monophosphate (XMP), so it can be reused for RNA or DNA synthesis. This chain is Xanthine phosphoribosyltransferase, found in Stutzerimonas stutzeri (strain A1501) (Pseudomonas stutzeri).